The chain runs to 552 residues: DNA ligase (552 aa).

Residue glutamate 229 participates in ATP binding. Lysine 231 (N6-AMP-lysine intermediate) is an active-site residue. Residues arginine 236 and glutamate 283 each coordinate ATP. Residues glutamate 283 and glutamate 377 each contribute to the Mg(2+) site. ATP-binding residues include lysine 382 and lysine 397.

The protein belongs to the ATP-dependent DNA ligase family. In terms of assembly, interacts with host TOP2A and TOP2B. Mg(2+) is required as a cofactor.

The protein resides in the host cytoplasm. It catalyses the reaction ATP + (deoxyribonucleotide)n-3'-hydroxyl + 5'-phospho-(deoxyribonucleotide)m = (deoxyribonucleotide)n+m + AMP + diphosphate.. In terms of biological role, DNA ligase that seals nicks in double-stranded DNA during DNA replication, DNA recombination and DNA repair. Recruits cellular topoisomerase II to sites of viral replication and assembly. Contributes to the repair of the viral genome following UV irradiation. This is DNA ligase (OPG180) from Vaccinia virus (strain Western Reserve) (VACV).